The chain runs to 481 residues: p-aminobenzoyl-glutamate hydrolase subunit B (481 aa).

Forms a heterodimer with AbgA. Mn(2+) is required as a cofactor.

Component of the p-aminobenzoyl-glutamate hydrolase multicomponent enzyme system which catalyzes the cleavage of p-aminobenzoyl-glutamate (PABA-GLU) to form p-aminobenzoate (PABA) and glutamate. AbgAB does not degrade dipeptides and the physiological role of abgABT should be clarified. In Escherichia coli (strain K12), this protein is p-aminobenzoyl-glutamate hydrolase subunit B (abgB).